The following is a 398-amino-acid chain: Acetate kinase (398 aa).

Asn-7 lines the Mg(2+) pocket. Residue Lys-14 participates in ATP binding. Arg-92 is a binding site for substrate. Catalysis depends on Asp-149, which acts as the Proton donor/acceptor. ATP contacts are provided by residues 209 to 213 (HLGNG), 284 to 286 (DFR), and 332 to 336 (GVGEN). Residue Glu-385 participates in Mg(2+) binding.

This sequence belongs to the acetokinase family. Homodimer. It depends on Mg(2+) as a cofactor. The cofactor is Mn(2+).

The protein resides in the cytoplasm. It carries out the reaction acetate + ATP = acetyl phosphate + ADP. Its pathway is metabolic intermediate biosynthesis; acetyl-CoA biosynthesis; acetyl-CoA from acetate: step 1/2. Functionally, catalyzes the formation of acetyl phosphate from acetate and ATP. Can also catalyze the reverse reaction. The chain is Acetate kinase from Clostridioides difficile (strain 630) (Peptoclostridium difficile).